The chain runs to 201 residues: Potassium-transporting ATPase KdpC subunit (201 aa).

The helical transmembrane segment at 10–30 (VLLVALTAVTGLAYPLAVTGI) threads the bilayer.

This sequence belongs to the KdpC family. As to quaternary structure, the system is composed of three essential subunits: KdpA, KdpB and KdpC.

The protein resides in the cell inner membrane. Functionally, part of the high-affinity ATP-driven potassium transport (or Kdp) system, which catalyzes the hydrolysis of ATP coupled with the electrogenic transport of potassium into the cytoplasm. This subunit acts as a catalytic chaperone that increases the ATP-binding affinity of the ATP-hydrolyzing subunit KdpB by the formation of a transient KdpB/KdpC/ATP ternary complex. The polypeptide is Potassium-transporting ATPase KdpC subunit (Methylorubrum extorquens (strain PA1) (Methylobacterium extorquens)).